The sequence spans 156 residues: Succinate dehydrogenase assembly factor 2-B, mitochondrial (156 aa).

The N-terminal 24 residues, 1 to 24 (MLRQFIISTVGRRQPLLMILQSRL), are a transit peptide targeting the mitochondrion.

This sequence belongs to the SDHAF2 family. In terms of assembly, interacts with the flavoprotein subunit within the SDH catalytic dimer.

The protein resides in the mitochondrion matrix. In terms of biological role, plays an essential role in the assembly of succinate dehydrogenase (SDH), an enzyme complex (also referred to as respiratory complex II) that is a component of both the tricarboxylic acid (TCA) cycle and the mitochondrial electron transport chain, and which couples the oxidation of succinate to fumarate with the reduction of ubiquinone (coenzyme Q) to ubiquinol. Required for flavinylation (covalent attachment of FAD) of the flavoprotein subunit of the SDH catalytic dimer. This Drosophila yakuba (Fruit fly) protein is Succinate dehydrogenase assembly factor 2-B, mitochondrial.